We begin with the raw amino-acid sequence, 749 residues long: 5-methyltetrahydropteroyltriglutamate--homocysteine methyltransferase (749 aa).

Residues 15 to 18 (RELK) and Lys-114 each bind 5-methyltetrahydropteroyltri-L-glutamate. L-homocysteine contacts are provided by residues 425-427 (IGS) and Glu-478. L-methionine-binding positions include 425–427 (IGS) and Glu-478. Position 555 (Trp-555) interacts with 5-methyltetrahydropteroyltri-L-glutamate. Asp-593 is a binding site for L-homocysteine. An L-methionine-binding site is contributed by Asp-593. A 5-methyltetrahydropteroyltri-L-glutamate-binding site is contributed by Glu-599. Zn(2+)-binding residues include His-636, Cys-638, and Glu-660. The active-site Proton donor is the His-689. Residue Cys-721 participates in Zn(2+) binding.

The protein belongs to the vitamin-B12 independent methionine synthase family. Requires Zn(2+) as cofactor.

The catalysed reaction is 5-methyltetrahydropteroyltri-L-glutamate + L-homocysteine = tetrahydropteroyltri-L-glutamate + L-methionine. It participates in amino-acid biosynthesis; L-methionine biosynthesis via de novo pathway; L-methionine from L-homocysteine (MetE route): step 1/1. Its function is as follows. Catalyzes the transfer of a methyl group from 5-methyltetrahydrofolate to homocysteine resulting in methionine formation. In Streptococcus suis (strain 05ZYH33), this protein is 5-methyltetrahydropteroyltriglutamate--homocysteine methyltransferase.